Here is a 555-residue protein sequence, read N- to C-terminus: Urocanate hydratase (555 aa).

Residues 52–53, Gln-130, 176–178, Glu-196, Arg-201, 242–243, 263–267, 273–274, and Tyr-322 each bind NAD(+); these read GG, GMG, NA, QTSAH, and YL. Cys-410 is an active-site residue. Gly-492 contributes to the NAD(+) binding site.

This sequence belongs to the urocanase family. Requires NAD(+) as cofactor.

Its subcellular location is the cytoplasm. It catalyses the reaction 4-imidazolone-5-propanoate = trans-urocanate + H2O. The protein operates within amino-acid degradation; L-histidine degradation into L-glutamate; N-formimidoyl-L-glutamate from L-histidine: step 2/3. Functionally, catalyzes the conversion of urocanate to 4-imidazolone-5-propionate. This is Urocanate hydratase from Shewanella putrefaciens (strain CN-32 / ATCC BAA-453).